Here is a 341-residue protein sequence, read N- to C-terminus: S-adenosylmethionine:tRNA ribosyltransferase-isomerase (341 aa).

It belongs to the QueA family. In terms of assembly, monomer.

The protein localises to the cytoplasm. The enzyme catalyses 7-aminomethyl-7-carbaguanosine(34) in tRNA + S-adenosyl-L-methionine = epoxyqueuosine(34) in tRNA + adenine + L-methionine + 2 H(+). It functions in the pathway tRNA modification; tRNA-queuosine biosynthesis. In terms of biological role, transfers and isomerizes the ribose moiety from AdoMet to the 7-aminomethyl group of 7-deazaguanine (preQ1-tRNA) to give epoxyqueuosine (oQ-tRNA). The sequence is that of S-adenosylmethionine:tRNA ribosyltransferase-isomerase from Staphylococcus aureus (strain USA300).